We begin with the raw amino-acid sequence, 321 residues long: MTPELRHMLRDDDLNHEEQKQVLELAIKFHHDRFYKQPFAGPQAVAVLFDKPSTRTRSSFSIGVAELGGYPLVIDKSGSQLGRGEPVADTARVLNRMAYGVVWRTFGQGRVEEMAKYSTHPVVNALTDDFHPCQILADFQTIAEHRGGVDNLKNQTIAYLGDAANNMANSYLLGGAVAGMDVRVAGPYGYLPRPDIVADAKRVAAETGGSILVTTDAKEAVKDADCVFTDTWVSMGEEAEYAIRSKPFWDYQVNTELMALAKPDALFQHCLPAYRGKEVTAEVIDGPQSVVWDEAENRLHAQKALLTWLTGKARGDESLLA.

Carbamoyl phosphate-binding positions include Ser53–Thr56, Gln80, Arg104, and His131–Gln134. Residues Asn166, Asp230, and Ser234–Met235 contribute to the L-ornithine site. Residues Cys270–Leu271 and Arg298 contribute to the carbamoyl phosphate site.

This sequence belongs to the aspartate/ornithine carbamoyltransferase superfamily. OTCase family.

It is found in the cytoplasm. It carries out the reaction carbamoyl phosphate + L-ornithine = L-citrulline + phosphate + H(+). Its pathway is amino-acid biosynthesis; L-arginine biosynthesis; L-arginine from L-ornithine and carbamoyl phosphate: step 1/3. Its function is as follows. Reversibly catalyzes the transfer of the carbamoyl group from carbamoyl phosphate (CP) to the N(epsilon) atom of ornithine (ORN) to produce L-citrulline. The sequence is that of Ornithine carbamoyltransferase from Bifidobacterium longum (strain NCC 2705).